Consider the following 905-residue polypeptide: Transcription termination factor 1 (905 aa).

2 stretches are compositionally biased toward basic and acidic residues: residues 1–16 (MEGE…PVSD) and 24–33 (IHKERPQKHS). Positions 1–33 (MEGESSRFEIHTPVSDKKKKKCSIHKERPQKHS) are disordered. The N-terminal region (NRD) stretch occupies residues 1–223 (MEGESSRFEI…AHKNKSKKKK (223 aa)). Phosphoserine is present on S65. Positions 151–443 (SHAHKSEALH…KSRPRQKKTQ (293 aa)) are disordered. Basic residues-rich tracts occupy residues 163–174 (VREKKNKKHQRK) and 215–226 (HKNKSKKKKKKS). The residue at position 240 (S240) is a Phosphoserine. T248 carries the post-translational modification Phosphothreonine. Basic residues-rich tracts occupy residues 270 to 283 (THKK…KKKS), 330 to 339 (NKSKKKKKKS), and 385 to 401 (TKKK…KRAR). At S403 the chain carries Phosphoserine. Positions 410 to 419 (PSKNSESTLF) are enriched in polar residues. Y476 is modified (phosphotyrosine). Phosphoserine is present on residues S478, S481, and S487. Residues 498-886 (LQEFIPNIKD…IEKESEGQAP (389 aa)) form a may be involved in interaction with ARF region. Myb-like domains lie at 612–661 (DVNN…SQIS) and 661–745 (SSQR…TEIL). K700 participates in a covalent cross-link: Glycyl lysine isopeptide (Lys-Gly) (interchain with G-Cter in SUMO2). S872 bears the Phosphoserine mark.

As to quaternary structure, oligomer. The oligomeric structure enables to interact simultaneously with two separate DNA fragments. Interacts with BAZ2A/TIP5. Interacts with CAVIN1. Interacts (via the N-terminal region (NRD) and a C-terminal region) with CDKN2A/ARF; the interaction is direct. Interacts (via C-terminal region) with NPM1/B23.

It localises to the nucleus. Its subcellular location is the nucleolus. The protein resides in the nucleoplasm. In terms of biological role, multifunctional nucleolar protein that terminates ribosomal gene transcription, mediates replication fork arrest and regulates RNA polymerase I transcription on chromatin. Plays a dual role in rDNA regulation, being involved in both activation and silencing of rDNA transcription. Interaction with BAZ2A/TIP5 recovers DNA-binding activity. The chain is Transcription termination factor 1 (TTF1) from Homo sapiens (Human).